The following is a 270-amino-acid chain: Phosphonates import ATP-binding protein PhnC (270 aa).

The region spanning 2-245 is the ABC transporter domain; the sequence is LVIEGLTCRF…IARELYDLEA (244 aa). Residue 34 to 41 coordinates ATP; that stretch reads GRSGAGKS.

The protein belongs to the ABC transporter superfamily. Phosphonates importer (TC 3.A.1.9.1) family. In terms of assembly, the complex is composed of two ATP-binding proteins (PhnC), two transmembrane proteins (PhnE) and a solute-binding protein (PhnD).

The protein localises to the cell inner membrane. The catalysed reaction is phosphonate(out) + ATP + H2O = phosphonate(in) + ADP + phosphate + H(+). Its function is as follows. Part of the ABC transporter complex PhnCDE involved in phosphonates import. Responsible for energy coupling to the transport system. This chain is Phosphonates import ATP-binding protein PhnC, found in Rhodopseudomonas palustris (strain BisB5).